Consider the following 353-residue polypeptide: Uroporphyrinogen decarboxylase (353 aa).

Residues 30–34 (RQAGR), aspartate 79, tyrosine 154, serine 209, and histidine 332 contribute to the substrate site.

This sequence belongs to the uroporphyrinogen decarboxylase family. Homodimer.

It is found in the cytoplasm. The enzyme catalyses uroporphyrinogen III + 4 H(+) = coproporphyrinogen III + 4 CO2. It functions in the pathway porphyrin-containing compound metabolism; protoporphyrin-IX biosynthesis; coproporphyrinogen-III from 5-aminolevulinate: step 4/4. In terms of biological role, catalyzes the decarboxylation of four acetate groups of uroporphyrinogen-III to yield coproporphyrinogen-III. In Mycobacterium marinum (strain ATCC BAA-535 / M), this protein is Uroporphyrinogen decarboxylase.